Here is a 398-residue protein sequence, read N- to C-terminus: Chalcone synthase 1 (398 aa).

The active site involves C167.

Belongs to the thiolase-like superfamily. Chalcone/stilbene synthases family.

The catalysed reaction is (E)-4-coumaroyl-CoA + 3 malonyl-CoA + 3 H(+) = 2',4,4',6'-tetrahydroxychalcone + 3 CO2 + 4 CoA. Its pathway is secondary metabolite biosynthesis; flavonoid biosynthesis. The primary product of this enzyme is 4,2',4',6'-tetrahydroxychalcone (also termed naringenin-chalcone or chalcone) which can under specific conditions spontaneously isomerize into naringenin. This is Chalcone synthase 1 (CHS1) from Gerbera hybrida (Daisy).